A 160-amino-acid polypeptide reads, in one-letter code: Serine-protein kinase RsbW (160 aa).

The protein belongs to the anti-sigma-factor family.

The enzyme catalyses L-seryl-[protein] + ATP = O-phospho-L-seryl-[protein] + ADP + H(+). The catalysed reaction is L-threonyl-[protein] + ATP = O-phospho-L-threonyl-[protein] + ADP + H(+). Functionally, negative regulator of sigma-B activity. Phosphorylates and inactivates its specific antagonist protein, RsbV. Upon phosphorylation of RsbV, RsbW is released and binds to sigma-B, thereby blocking its ability to form an RNA polymerase holoenzyme (E-sigma-B). This is Serine-protein kinase RsbW from Bacillus cereus (strain B4264).